Here is a 100-residue protein sequence, read N- to C-terminus: Small ribosomal subunit protein uS14c (100 aa).

It belongs to the universal ribosomal protein uS14 family. As to quaternary structure, part of the 30S ribosomal subunit.

It is found in the plastid. Its function is as follows. Binds 16S rRNA, required for the assembly of 30S particles. The protein is Small ribosomal subunit protein uS14c of Cuscuta exaltata (Tall dodder).